Consider the following 367-residue polypeptide: Alanine racemase (367 aa).

Lysine 35 functions as the Proton acceptor; specific for D-alanine in the catalytic mechanism. Lysine 35 carries the N6-(pyridoxal phosphate)lysine modification. Position 130 (arginine 130) interacts with substrate. The Proton acceptor; specific for L-alanine role is filled by tyrosine 259. Methionine 307 is a binding site for substrate.

This sequence belongs to the alanine racemase family. Pyridoxal 5'-phosphate is required as a cofactor.

It catalyses the reaction L-alanine = D-alanine. Its pathway is amino-acid biosynthesis; D-alanine biosynthesis; D-alanine from L-alanine: step 1/1. Catalyzes the interconversion of L-alanine and D-alanine. May also act on other amino acids. The polypeptide is Alanine racemase (alr) (Delftia acidovorans (strain DSM 14801 / SPH-1)).